The sequence spans 261 residues: U1 small nuclear ribonucleoprotein 70 kDa homolog (261 aa).

Residues 100-178 form the RRM domain; sequence KTMFLSRLSY…RRIVVDVERG (79 aa). A disordered region spans residues 192–261; the sequence is GLGGRHYTKE…DSSPKRRRYN (70 aa). Over residues 198–215 the composition is skewed to basic and acidic residues; that stretch reads YTKERPRRERGSRFRGDS. The span at 216–235 shows a compositional bias: gly residues; the sequence is GFRGGYRGGFRKSSGGGSRF.

Component of the spliceosome, where it is associated with snRNP U1. Associates with U1 snRNA.

It is found in the nucleus. In terms of biological role, involved in nuclear mRNA splicing. Essential for growth. This is U1 small nuclear ribonucleoprotein 70 kDa homolog from Schizosaccharomyces pombe (strain 972 / ATCC 24843) (Fission yeast).